The primary structure comprises 299 residues: Phosphate import ATP-binding protein PstB 1 (299 aa).

Residues 1–51 (MTENEMTSNDSTEPTPTTETAASSPDPSGDPLIEQSIDVEGTDSTAAETGK) are disordered. Over residues 10–27 (DSTEPTPTTETAASSPDP) the composition is skewed to low complexity. The 241-residue stretch at 54 to 294 (IESSDLNVFY…PESQRVEDYI (241 aa)) folds into the ABC transporter domain. 86–93 (GPSGCGKS) is an ATP binding site.

It belongs to the ABC transporter superfamily. Phosphate importer (TC 3.A.1.7) family. The complex is composed of two ATP-binding proteins (PstB), two transmembrane proteins (PstC and PstA) and a solute-binding protein (PstS).

Its subcellular location is the cell membrane. It catalyses the reaction phosphate(out) + ATP + H2O = ADP + 2 phosphate(in) + H(+). Part of the ABC transporter complex PstSACB involved in phosphate import. Responsible for energy coupling to the transport system. The chain is Phosphate import ATP-binding protein PstB 1 from Haloarcula marismortui (strain ATCC 43049 / DSM 3752 / JCM 8966 / VKM B-1809) (Halobacterium marismortui).